The chain runs to 146 residues: UPF0178 protein BCG9842_B2187 (146 aa).

The protein belongs to the UPF0178 family.

This Bacillus cereus (strain G9842) protein is UPF0178 protein BCG9842_B2187.